The primary structure comprises 131 residues: M-zodatoxin-Lt8o (131 aa).

The first 20 residues, 1-20, serve as a signal peptide directing secretion; it reads MKYFVVALALVAAFACIAES. The propeptide occupies 21–60; that stretch reads KPAESEHELAEVEEENELADLEDAVWLEHLADLSDLEEAR.

Belongs to the cationic peptide 06 (cytoinsectotoxin) family. As to expression, expressed by the venom gland.

Its subcellular location is the secreted. Functionally, insecticidal, cytolytic and antimicrobial peptide. Forms voltage-dependent, ion-permeable channels in membranes. At high concentration causes cell membrane lysis. The protein is M-zodatoxin-Lt8o (cit 1-14) of Lachesana tarabaevi (Spider).